Here is a 620-residue protein sequence, read N- to C-terminus: Kelch-like protein 32 (620 aa).

Positions 42 to 109 (CDITLIAEEQ…AYTGQILLEP (68 aa)) constitute a BTB domain. Kelch repeat units follow at residues 290 to 346 (TLYI…VMGD), 347 to 398 (FLFV…AMEE), 399 to 446 (YLYA…VADG), 447 to 494 (LLWI…AVQR), 496 to 547 (LYVL…VHNG), and 549 to 599 (IYLV…FLPA).

This chain is Kelch-like protein 32 (KLHL32), found in Homo sapiens (Human).